The sequence spans 445 residues: tRNA modification GTPase MnmE (445 aa).

The (6S)-5-formyl-5,6,7,8-tetrahydrofolate site is built by Arg-21, Glu-78, and Lys-117. A TrmE-type G domain is found at 213 to 370 (GFRIALVGAP…LKETLSERVV (158 aa)). GTP contacts are provided by residues 223 to 228 (NAGKST), 242 to 248 (TATPGTT), and 267 to 270 (DTAG). Ser-227 and Thr-248 together coordinate Mg(2+). Lys-445 is a (6S)-5-formyl-5,6,7,8-tetrahydrofolate binding site.

The protein belongs to the TRAFAC class TrmE-Era-EngA-EngB-Septin-like GTPase superfamily. TrmE GTPase family. Homodimer. Heterotetramer of two MnmE and two MnmG subunits. K(+) serves as cofactor.

It is found in the cytoplasm. Its function is as follows. Exhibits a very high intrinsic GTPase hydrolysis rate. Involved in the addition of a carboxymethylaminomethyl (cmnm) group at the wobble position (U34) of certain tRNAs, forming tRNA-cmnm(5)s(2)U34. This chain is tRNA modification GTPase MnmE, found in Phenylobacterium zucineum (strain HLK1).